The sequence spans 64 residues: Large ribosomal subunit protein uL30 (64 aa).

The tract at residues methionine 1 to serine 22 is disordered.

It belongs to the universal ribosomal protein uL30 family. As to quaternary structure, part of the 50S ribosomal subunit.

The polypeptide is Large ribosomal subunit protein uL30 (Nitrobacter hamburgensis (strain DSM 10229 / NCIMB 13809 / X14)).